Reading from the N-terminus, the 688-residue chain is PTS system glucoside-specific EIICBA component (688 aa).

Residues 3 to 427 (KKLFGQLQRI…FKLKTPGRED (425 aa)) form the PTS EIIC type-1 domain. Helical transmembrane passes span 12 to 32 (IGKALMLPVAILPAAGILLAF), 81 to 101 (LGLAGGDGVAALAALVGYLIM), 137 to 157 (LVLGIPTLQTGVFGGIIMGAL), 182 to 202 (FVPIVTSVVAIATGVVLSFAW), 223 to 243 (LTTFIFGIIERSLIPFGLHHI), 284 to 304 (AFTTGKYPFMMFGLPAAAFAI), 315 to 335 (IVGGLMLSAGLTAFLTGITEP), 340 to 360 (FLFVAPVLYGIHVLLAGTSFL), 364 to 384 (LLGVKIGMTFSGGFIDYILYG), and 395 to 415 (LVIPVGIVYAIVYYFLFDFAI). Residues 438 to 519 (AKLPFDVLDA…AKIMSGEITK (82 aa)) enclose the PTS EIIB type-1 domain. Catalysis depends on C460, which acts as the Phosphocysteine intermediate; for EIIB activity. The region spanning 560–664 (DQVFAGKMMG…SIVTPMIITN (105 aa)) is the PTS EIIA type-1 domain. The Tele-phosphohistidine intermediate; for EIIA activity role is filled by H612.

Its subcellular location is the cell membrane. Functionally, the phosphoenolpyruvate-dependent sugar phosphotransferase system (sugar PTS), a major carbohydrate active -transport system, catalyzes the phosphorylation of incoming sugar substrates concomitantly with their translocation across the cell membrane. This system is involved in alpha- and beta-glucoside transport. This Staphylococcus aureus (strain MRSA252) protein is PTS system glucoside-specific EIICBA component (glcB).